The following is a 427-amino-acid chain: BTB/POZ domain-containing protein KCTD16 (427 aa).

One can recognise a BTB domain in the interval 25–98 (EVIELNVGGQ…LRDRQVVLPD (74 aa)). Residue Y112 is modified to Phosphotyrosine. Phosphoserine occurs at positions 130, 137, 143, and 146.

As to quaternary structure, homopentamer; forms an open pentamer. In contrast to other BTB domain-containing proteins, does not interact with CUL3. Interacts as a tetramer with GABBR1 and GABBR2. Expressed in the brain, mainly in the hippocampus.

It is found in the presynaptic cell membrane. The protein resides in the postsynaptic cell membrane. In terms of biological role, auxiliary subunit of GABA-B receptors that determine the pharmacology and kinetics of the receptor response. Increases agonist potency and markedly alter the G-protein signaling of the receptors by accelerating onset and promoting desensitization. The protein is BTB/POZ domain-containing protein KCTD16 (Kctd16) of Mus musculus (Mouse).